The following is a 181-amino-acid chain: ATP synthase subunit delta (181 aa).

This sequence belongs to the ATPase delta chain family. F-type ATPases have 2 components, F(1) - the catalytic core - and F(0) - the membrane proton channel. F(1) has five subunits: alpha(3), beta(3), gamma(1), delta(1), epsilon(1). F(0) has three main subunits: a(1), b(2) and c(10-14). The alpha and beta chains form an alternating ring which encloses part of the gamma chain. F(1) is attached to F(0) by a central stalk formed by the gamma and epsilon chains, while a peripheral stalk is formed by the delta and b chains.

It is found in the cell membrane. Functionally, f(1)F(0) ATP synthase produces ATP from ADP in the presence of a proton or sodium gradient. F-type ATPases consist of two structural domains, F(1) containing the extramembraneous catalytic core and F(0) containing the membrane proton channel, linked together by a central stalk and a peripheral stalk. During catalysis, ATP synthesis in the catalytic domain of F(1) is coupled via a rotary mechanism of the central stalk subunits to proton translocation. Its function is as follows. This protein is part of the stalk that links CF(0) to CF(1). It either transmits conformational changes from CF(0) to CF(1) or is implicated in proton conduction. The protein is ATP synthase subunit delta of Desulforamulus reducens (strain ATCC BAA-1160 / DSM 100696 / MI-1) (Desulfotomaculum reducens).